The following is a 155-amino-acid chain: SsrA-binding protein (155 aa).

Positions 127–149 (KKDYDKRNDMRKKEAKREMERTF) are enriched in basic and acidic residues. Residues 127–155 (KKDYDKRNDMRKKEAKREMERTFKSKNQY) are disordered.

It belongs to the SmpB family.

Its subcellular location is the cytoplasm. Its function is as follows. Required for rescue of stalled ribosomes mediated by trans-translation. Binds to transfer-messenger RNA (tmRNA), required for stable association of tmRNA with ribosomes. tmRNA and SmpB together mimic tRNA shape, replacing the anticodon stem-loop with SmpB. tmRNA is encoded by the ssrA gene; the 2 termini fold to resemble tRNA(Ala) and it encodes a 'tag peptide', a short internal open reading frame. During trans-translation Ala-aminoacylated tmRNA acts like a tRNA, entering the A-site of stalled ribosomes, displacing the stalled mRNA. The ribosome then switches to translate the ORF on the tmRNA; the nascent peptide is terminated with the 'tag peptide' encoded by the tmRNA and targeted for degradation. The ribosome is freed to recommence translation, which seems to be the essential function of trans-translation. The chain is SsrA-binding protein from Lysinibacillus sphaericus (strain C3-41).